Here is a 1118-residue protein sequence, read N- to C-terminus: uncharacterized protein (1118 aa).

Disordered regions lie at residues Met1 to Asp69, Pro1044 to Asp1071, and Ile1090 to Leu1118. The span at Asp13–Asp34 shows a compositional bias: acidic residues. Positions Ser35–Lys60 are enriched in polar residues. Over residues Glu1107–Leu1118 the composition is skewed to acidic residues.

This is an uncharacterized protein from Caenorhabditis elegans.